Reading from the N-terminus, the 81-residue chain is U-poneritoxin(01)-Om2a (81 aa).

An N-terminal signal peptide occupies residues 1–25 (MKPSGITFAFLVVFMMAIMYNSVQA). The propeptide occupies 26 to 47 (AAIADADADAEAKAFADAFAEA).

The protein belongs to the formicidae venom precursor-01 superfamily. In terms of processing, truncated sequences of this peptide have also been found in the venom. It is possible they have been cleaved in the venom. Expressed by the venom gland.

It localises to the secreted. Functionally, cationic amphipathic alpha-helical peptide with antimicrobial activities against E.coli (MIC=6.2 uM), S.aureus (MIC=6.2 uM), and S.cerevisiae (MIC=50 uM). Also shows histamine-releasing activity (30.1% at 10 uM) and a weak hemolytic activity (10.4% at 50 uM). In Odontomachus monticola (Trap-jaw ant), this protein is U-poneritoxin(01)-Om2a.